The primary structure comprises 148 residues: Large ribosomal subunit protein bL9 (148 aa).

This sequence belongs to the bacterial ribosomal protein bL9 family.

Functionally, binds to the 23S rRNA. The chain is Large ribosomal subunit protein bL9 from Prosthecochloris aestuarii (strain DSM 271 / SK 413).